Here is a 564-residue protein sequence, read N- to C-terminus: Keratin, type II cytoskeletal 6A (564 aa).

The segment covering 1–11 has biased composition (low complexity); that stretch reads MASTSTTIRSH. Residues 1-23 form a disordered region; sequence MASTSTTIRSHSSSRRGFSANSA. Ala2 is modified (N-acetylalanine). The interval 2 to 162 is head; it reads ASTSTTIRSH…DPTIQRVRAE (161 aa). Residues 163–198 form a coil 1A region; that stretch reads EREQIKTLNNKFASFIDKVRFLEQQNKVLETKWTLL. The IF rod domain occupies 163–476; that stretch reads EREQIKTLNN…KLLEGEECRL (314 aa). The linker 1 stretch occupies residues 199 to 217; it reads QEQGTKTVRQNLEPLFEQY. The coil 1B stretch occupies residues 218-309; the sequence is INNLRRQLDS…ALYDAELSQM (92 aa). Residues 310 to 333 are linker 12; sequence QTHISDTSVVLSMDNNRNLDLDSI. The segment at 334–472 is coil 2; sequence IAEVKAQYEE…ATYRKLLEGE (139 aa). The interval 473–564 is tail; sequence ECRLNGEGVG…SSSSRKSYKH (92 aa).

This sequence belongs to the intermediate filament family. As to quaternary structure, heterodimer of a type I and a type II keratin. KRT6 isomers associate with KRT16 and/or KRT17. Interacts with TCHP. As to expression, expressed in the corneal epithelium (at protein level).

Functionally, epidermis-specific type I keratin involved in wound healing. Involved in the activation of follicular keratinocytes after wounding, while it does not play a major role in keratinocyte proliferation or migration. Participates in the regulation of epithelial migration by inhibiting the activity of SRC during wound repair. The polypeptide is Keratin, type II cytoskeletal 6A (KRT6A) (Homo sapiens (Human)).